The sequence spans 331 residues: MSDILAVAREQVLERGVGLNQDQTLQVLQLPDDRLDDLLALAHEVRMAWCGPDVEVEGIISLKTGGCPEDCHFCSQSGLFASPVRSAWLDVPSLVEAAKQTAKTGATEFCIVAAVRGPDERLLAQVAAGIEAIRNEVDIQIACSLGMLTAEQVERLSEMGVHRYNHNLETARSFFTNVVTTHTWEERWDTLRMVREAGMEVCCGGILGMGETLEQRAEFAANLAELDPHEVPLNFLNPRPGTPFGDLEVLPAAEALKAVAAFRLALPRTMLRFAGGREITLGDLGAKKGILGGINAVIVGNYLTTLGRPAEADLELLDDLQMPIKALNASL.

The Radical SAM core domain occupies 52 to 277; it reads PDVEVEGIIS…RTMLRFAGGR (226 aa). 3 residues coordinate [4Fe-4S] cluster: Cys-67, Cys-71, and Cys-74. Residues Cys-110, Cys-143, Cys-202, and Arg-272 each coordinate [2Fe-2S] cluster.

The protein belongs to the radical SAM superfamily. Biotin synthase family. Homodimer. [4Fe-4S] cluster serves as cofactor. The cofactor is [2Fe-2S] cluster.

The catalysed reaction is (4R,5S)-dethiobiotin + (sulfur carrier)-SH + 2 reduced [2Fe-2S]-[ferredoxin] + 2 S-adenosyl-L-methionine = (sulfur carrier)-H + biotin + 2 5'-deoxyadenosine + 2 L-methionine + 2 oxidized [2Fe-2S]-[ferredoxin]. It functions in the pathway cofactor biosynthesis; biotin biosynthesis; biotin from 7,8-diaminononanoate: step 2/2. Functionally, catalyzes the conversion of dethiobiotin (DTB) to biotin by the insertion of a sulfur atom into dethiobiotin via a radical-based mechanism. This chain is Biotin synthase, found in Mycobacterium sp. (strain JLS).